Here is a 359-residue protein sequence, read N- to C-terminus: Nicotinate-nucleotide--dimethylbenzimidazole phosphoribosyltransferase (359 aa).

The active-site Proton acceptor is the glutamate 318.

Belongs to the CobT family. Homodimer.

It catalyses the reaction 5,6-dimethylbenzimidazole + nicotinate beta-D-ribonucleotide = alpha-ribazole 5'-phosphate + nicotinate + H(+). Its pathway is nucleoside biosynthesis; alpha-ribazole biosynthesis; alpha-ribazole from 5,6-dimethylbenzimidazole: step 1/2. Its function is as follows. Catalyzes the synthesis of alpha-ribazole-5'-phosphate from nicotinate mononucleotide (NAMN) and 5,6-dimethylbenzimidazole (DMB). The chain is Nicotinate-nucleotide--dimethylbenzimidazole phosphoribosyltransferase from Escherichia coli (strain ATCC 8739 / DSM 1576 / NBRC 3972 / NCIMB 8545 / WDCM 00012 / Crooks).